Consider the following 81-residue polypeptide: Large ribosomal subunit protein bL31B (81 aa).

The protein belongs to the bacterial ribosomal protein bL31 family. Type B subfamily. Part of the 50S ribosomal subunit.

This chain is Large ribosomal subunit protein bL31B, found in Borreliella burgdorferi (strain ZS7) (Borrelia burgdorferi).